The chain runs to 247 residues: NADH dehydrogenase [ubiquinone] flavoprotein 2, mitochondrial (247 aa).

The N-terminal 40 residues, 1-40 (MFRSLLKRTTFLNQLNKSNGFNRNYFKQSTLTRSDALSRH), are a transit peptide targeting the mitochondrion. [2Fe-2S] cluster contacts are provided by Cys135, Cys140, Cys176, and Cys180. The interval 211-247 (NKPTKIGPQTHRKAAEGPQGKTTLLEPPVGPTCRDDL) is disordered.

Belongs to the complex I 24 kDa subunit family. As to quaternary structure, complex I is composed of 45 different subunits. This is a component of the flavoprotein-sulfur (FP) fragment of the enzyme. The cofactor is [2Fe-2S] cluster.

The protein resides in the mitochondrion inner membrane. The catalysed reaction is a ubiquinone + NADH + 5 H(+)(in) = a ubiquinol + NAD(+) + 4 H(+)(out). Its function is as follows. Core subunit of the mitochondrial membrane respiratory chain NADH dehydrogenase (Complex I) that is believed to belong to the minimal assembly required for catalysis. Complex I functions in the transfer of electrons from NADH to the respiratory chain. The immediate electron acceptor for the enzyme is believed to be ubiquinone. The chain is NADH dehydrogenase [ubiquinone] flavoprotein 2, mitochondrial (ndufv2) from Dictyostelium discoideum (Social amoeba).